The primary structure comprises 109 residues: Cell cycle protein GpsB (109 aa).

Positions 36–63 (IKDYETYAALVKSLRQEIADLKEELTRK) form a coiled coil.

It belongs to the GpsB family. Forms polymers through the coiled coil domains. Interacts with PBP1, MreC and EzrA.

The protein resides in the cytoplasm. In terms of biological role, divisome component that associates with the complex late in its assembly, after the Z-ring is formed, and is dependent on DivIC and PBP2B for its recruitment to the divisome. Together with EzrA, is a key component of the system that regulates PBP1 localization during cell cycle progression. Its main role could be the removal of PBP1 from the cell pole after pole maturation is completed. Also contributes to the recruitment of PBP1 to the division complex. Not essential for septum formation. In Streptococcus pneumoniae serotype 4 (strain ATCC BAA-334 / TIGR4), this protein is Cell cycle protein GpsB.